The chain runs to 251 residues: Triosephosphate isomerase (251 aa).

Position 9–11 (9–11 (NWK)) interacts with substrate. The Electrophile role is filled by H95. E167 (proton acceptor) is an active-site residue. Substrate-binding positions include G173, S212, and 233–234 (GG).

This sequence belongs to the triosephosphate isomerase family. In terms of assembly, homodimer.

Its subcellular location is the cytoplasm. The catalysed reaction is D-glyceraldehyde 3-phosphate = dihydroxyacetone phosphate. It functions in the pathway carbohydrate biosynthesis; gluconeogenesis. The protein operates within carbohydrate degradation; glycolysis; D-glyceraldehyde 3-phosphate from glycerone phosphate: step 1/1. Involved in the gluconeogenesis. Catalyzes stereospecifically the conversion of dihydroxyacetone phosphate (DHAP) to D-glyceraldehyde-3-phosphate (G3P). This Ectopseudomonas mendocina (strain ymp) (Pseudomonas mendocina) protein is Triosephosphate isomerase.